A 348-amino-acid chain; its full sequence is MSSSQDKANLPANNSRARAKKLVLELQDEICAGLETIDGEGKFLEESWERPEGGGGRSRVLKDGQIFEQGGVNFSEVHGNELPPSIISQRPEAKGHSWFATGTSMVLHPKSPYIPTVHLNYRYFEAGPVWWFGGGADLTPFYPYLSDTRHFHSCHKNACDTIDKDLHKVFKPWCDEYFFLKHRNETRGVGGIFYDYQDGSGLLYKGQNANGKASKIAKELGEYSLNWENLFSLAKACGQAFLPSYEPIIKKRKNQSFSTKERDFQLYRRGRYAEFNLVWDRGTIFGLQTNGRTESILMSLPPLARWEYGYKPEENSREALLTDLFTKPQDWFTDKSLEKRCLTHQALD.

Position 104 (S104) interacts with substrate. The a divalent metal cation site is built by H108 and H118. The Proton donor role is filled by H118. A substrate-binding site is contributed by 120-122 (NYR). H152 and H182 together coordinate a divalent metal cation. Residues 272–307 (YAEFNLVWDRGTIFGLQTNGRTESILMSLPPLARWE) are important for dimerization.

It belongs to the aerobic coproporphyrinogen-III oxidase family. Homodimer. A divalent metal cation is required as a cofactor.

It is found in the cytoplasm. The catalysed reaction is coproporphyrinogen III + O2 + 2 H(+) = protoporphyrinogen IX + 2 CO2 + 2 H2O. It participates in porphyrin-containing compound metabolism; protoporphyrin-IX biosynthesis; protoporphyrinogen-IX from coproporphyrinogen-III (O2 route): step 1/1. Involved in the heme and chlorophyll biosynthesis. Catalyzes the aerobic oxidative decarboxylation of propionate groups of rings A and B of coproporphyrinogen-III to yield the vinyl groups in protoporphyrinogen-IX. The protein is Oxygen-dependent coproporphyrinogen-III oxidase of Prochlorococcus marinus (strain NATL2A).